Here is a 1513-residue protein sequence, read N- to C-terminus: DNA topoisomerase 2-binding protein 1-A (1513 aa).

2 consecutive BRCT domains span residues 101–189 (VYNM…YSDV) and 194–283 (YLCP…MYKI). A disordered region spans residues 289 to 308 (IKSVPDTSTPTGGNSKPNSR). 3 BRCT domains span residues 354–444 (APDD…IYFH), 530–621 (ADTS…SNAL), and 629–726 (EGST…SYLV). A compositionally biased stretch (polar residues) spans 789–799 (QHNKNPQTSGG). Residues 789–809 (QHNKNPQTSGGESKVLQREPS) form a disordered region. The Nuclear localization signal signature appears at 844 to 850 (PNQKNRT). The region spanning 892-984 (DNSKLLINVV…KRVPEALYPH (93 aa)) is the BRCT 6 domain. Disordered regions lie at residues 1031 to 1053 (ETSD…SKDV) and 1086 to 1109 (SVGR…RNGR). Serine 1131 carries the phosphoserine modification. BRCT domains lie at 1253–1344 (SKEE…DYEW) and 1383–1480 (IAEG…NYCL). The Nuclear localization signal signature appears at 1508–1511 (KRSR).

This sequence belongs to the TOPBP1 family. Interacts with cdc45. Interacts (via BRCT domains) with ticrr; interaction is cdk2-dependent. Interacts with atr in the presence of atrip. Interacts with recql4 (via N-terminus). Interacts with gmnc. Interacts with cip2a; forming the CIP2A-TOPBP1 complex. In terms of processing, phosphorylation at Ser-1131 is essential for phosphorylation of chek1, and thus for checkpoint regulation.

It is found in the nucleus. The protein localises to the chromosome. It localises to the cytoplasm. Its subcellular location is the cytoskeleton. The protein resides in the microtubule organizing center. It is found in the centrosome. The protein localises to the spindle pole. Its function is as follows. Scaffold protein that acts as a key protein-protein adapter in DNA replication and DNA repair. Composed of multiple BRCT domains, which specifically recognize and bind phosphorylated proteins, bringing proteins together into functional combinations. Required for DNA replication initiation but not for the formation of pre-replicative complexes or the elongation stages. Necessary for the loading of replication factors onto chromatin, including gmnc, cdc45, DNA polymerases and components of the GINS complex such as ginsl/sld5. Plays a central role in DNA repair by bridging proteins and promoting recruitment of proteins to DNA damage sites. Involved in double-strand break (DSB) repair via homologous recombination in S-phase by promoting the exchange between the DNA replication factor A (RPA) complex and RAD51. Involved in microhomology-mediated end-joining (MMEJ) DNA repair by promoting recruitment of polymerase theta (POLQ) to DNA damage sites during mitosis. In response to DNA damage, triggers the recruitment of checkpoint signaling proteins on chromatin, which activate the chek1 signaling pathway and block S-phase progression. Increases the kinase activity of atr to numerous substrates, and is required for the phosphorylation of Rad1. Together with cip2a, plays an essential role in the response to genome instability generated by the presence of acentric chromosome fragments derived from shattered chromosomes within micronuclei. The CIP2A-TOPBP1 complex tethers chromosome fragments during mitosis to ensure clustered segregation of the fragments to a single daughter cell nucleus, facilitating re-ligation with limited chromosome scattering and loss. The polypeptide is DNA topoisomerase 2-binding protein 1-A (topbp1-A) (Xenopus laevis (African clawed frog)).